The following is a 1239-amino-acid chain: Codanin-1 (1239 aa).

At A2 the chain carries N-acetylalanine. Over residues 61-72 the composition is skewed to polar residues; it reads SRVLPQGPSTPA. Disordered stretches follow at residues 61 to 249 and 261 to 299; these read SRVL…PPGC and KART…ADPA. Residue T70 is modified to Phosphothreonine. Low complexity-rich tracts occupy residues 77–88, 95–116, and 138–179; these read ASAALPARQGAP, ARSQ…PLAR, and GAAE…LSNL. The interaction with ASF1A/B stretch occupies residues 193–213; that stretch reads AGRTKPSRRINPTPVSEERSL. A compositionally biased stretch (polar residues) spans 219 to 238; it reads CFTSPPISCVPSSQPSTLDT. S270 is subject to Phosphoserine. Helical transmembrane passes span 317–337 and 631–651; these read CIAE…LQLL and FAVV…VAFL.

As to quaternary structure, interacts with ASF1A and ASF1B. Found in a cytosolic complex with ASF1A, ASF1B, IPO4 and histones H3.1 and H4. In terms of tissue distribution, widely expressed in adult mice, the highest levels can be measured in erythropoietic cells.

It is found in the cytoplasm. The protein localises to the nucleus. It localises to the membrane. Its function is as follows. May act as a negative regulator of ASF1 in chromatin assembly. The polypeptide is Codanin-1 (Cdan1) (Mus musculus (Mouse)).